The sequence spans 563 residues: Chaperonin GroEL 1 (563 aa).

Residues 29 to 32 (TIGP), 86 to 90 (DGTTT), Gly-413, 476 to 478 (NAA), and Asp-492 contribute to the ATP site. Residues 520 to 545 (DKPEPPSPAGGEGGGDPMGGMGGMGG) form a disordered region. Residues 529–545 (GGEGGGDPMGGMGGMGG) show a composition bias toward gly residues.

The protein belongs to the chaperonin (HSP60) family. As to quaternary structure, forms a cylinder of 14 subunits composed of two heptameric rings stacked back-to-back. Interacts with the co-chaperonin GroES.

It is found in the cytoplasm. It catalyses the reaction ATP + H2O + a folded polypeptide = ADP + phosphate + an unfolded polypeptide.. Functionally, together with its co-chaperonin GroES, plays an essential role in assisting protein folding. The GroEL-GroES system forms a nano-cage that allows encapsulation of the non-native substrate proteins and provides a physical environment optimized to promote and accelerate protein folding. This Prochlorococcus marinus (strain SARG / CCMP1375 / SS120) protein is Chaperonin GroEL 1.